Here is a 315-residue protein sequence, read N- to C-terminus: Olfactory receptor 4A8 (315 aa).

Residues 1 to 24 (MRQNNNITEFVLLGFSQYPDVQNA) are Extracellular-facing. A glycan (N-linked (GlcNAc...) asparagine) is linked at N6. A helical membrane pass occupies residues 25 to 45 (LFVMFLLIYIVTMVGNLLIVV). At 46 to 57 (SIIASPFLGSPV) the chain is on the cytoplasmic side. Residues 58 to 80 (YFFLACLSFIDAVYSTTISPVLI) form a helical membrane-spanning segment. The Extracellular segment spans residues 81 to 95 (VDLLCDKKTISFPAC). Residues C95 and C177 are joined by a disulfide bond. The chain crosses the membrane as a helical span at residues 96–116 (MGQLFIEHLFGDTDVFLLVVM). The Cytoplasmic segment spans residues 117–139 (AYDRYVATCKPLRYLTIMNRQVC). Residues 140–160 (ILLLVVAVTGGFLHSVFQILV) form a helical membrane-spanning segment. The Extracellular portion of the chain corresponds to 161-193 (VYSLPFCGPNVIYHFFCNIYPLLDLECTDTYFV). A helical membrane pass occupies residues 194-214 (GLAVVFNGGAICMVIFTLLLI). Residues 215 to 235 (SYGVILNSLKTYSPEGRHKAP) are Cytoplasmic-facing. The helical transmembrane segment at 236-256 (FICSSHFIMVILFFVPCIFLY) threads the bilayer. The Extracellular segment spans residues 257-266 (VRPVSNFPID). Residues 267-287 (KFLTVFYSVITPKLNPFIYML) form a helical membrane-spanning segment. Residues 288–315 (RNSEMRNAIENLLGYQSGKTGFRCSKLN) are Cytoplasmic-facing.

Belongs to the G-protein coupled receptor 1 family.

Its subcellular location is the cell membrane. In terms of biological role, odorant receptor. This Homo sapiens (Human) protein is Olfactory receptor 4A8 (OR4A8).